The following is a 263-amino-acid chain: Phosphonates import ATP-binding protein PhnC 1 (263 aa).

An ABC transporter domain is found at 3-248 (IQVENLWVAF…KEKELYFGEK (246 aa)). 37–44 (GPSGAGKS) contributes to the ATP binding site.

It belongs to the ABC transporter superfamily. Phosphonates importer (TC 3.A.1.9.1) family. As to quaternary structure, the complex is composed of two ATP-binding proteins (PhnC), two transmembrane proteins (PhnE) and a solute-binding protein (PhnD).

The protein localises to the cell inner membrane. It carries out the reaction phosphonate(out) + ATP + H2O = phosphonate(in) + ADP + phosphate + H(+). Part of the ABC transporter complex PhnCDE involved in phosphonates import. Responsible for energy coupling to the transport system. The protein is Phosphonates import ATP-binding protein PhnC 1 of Synechococcus sp. (strain JA-2-3B'a(2-13)) (Cyanobacteria bacterium Yellowstone B-Prime).